Consider the following 496-residue polypeptide: UDP-N-acetylmuramoylalanine--D-glutamate ligase (496 aa).

Glycine 130–threonine 136 contacts ATP.

This sequence belongs to the MurCDEF family.

Its subcellular location is the cytoplasm. The enzyme catalyses UDP-N-acetyl-alpha-D-muramoyl-L-alanine + D-glutamate + ATP = UDP-N-acetyl-alpha-D-muramoyl-L-alanyl-D-glutamate + ADP + phosphate + H(+). The protein operates within cell wall biogenesis; peptidoglycan biosynthesis. In terms of biological role, cell wall formation. Catalyzes the addition of glutamate to the nucleotide precursor UDP-N-acetylmuramoyl-L-alanine (UMA). This is UDP-N-acetylmuramoylalanine--D-glutamate ligase from Mycobacterium bovis (strain ATCC BAA-935 / AF2122/97).